Here is a 212-residue protein sequence, read N- to C-terminus: Uridine kinase (212 aa).

Residue 13-20 coordinates ATP; it reads GASASGKS.

It belongs to the uridine kinase family.

Its subcellular location is the cytoplasm. It catalyses the reaction uridine + ATP = UMP + ADP + H(+). The catalysed reaction is cytidine + ATP = CMP + ADP + H(+). It participates in pyrimidine metabolism; CTP biosynthesis via salvage pathway; CTP from cytidine: step 1/3. The protein operates within pyrimidine metabolism; UMP biosynthesis via salvage pathway; UMP from uridine: step 1/1. This is Uridine kinase from Shewanella baltica (strain OS223).